A 128-amino-acid chain; its full sequence is Virion-associated protein (128 aa).

Coiled coils occupy residues 1 to 30 (MNLA…ILAK) and 37 to 58 (ESSN…EMKE). Residues 98–128 (FDVGNEGMGSSTNPNALKWPPTEKPQPWPPR) are disordered. The segment covering 119 to 128 (TEKPQPWPPR) has biased composition (pro residues). The capsid binding stretch occupies residues 122–128 (PQPWPPR).

This sequence belongs to the caulimovirus ORF III family. Homotetramer, through coiled-coil domain. Homotrimer when interacts with icosehadral capsid. Interacts with capsid protein, and with Movement protein.

It is found in the virion. The protein resides in the host cell junction. Its subcellular location is the host plasmodesma. Plays a role in virus cell-to-cell and plant-to-plant transmission. Interacts with virion icosahedral capsid and movement protein, thereby facilitating virion cell-to-cell transmission through plasmodesmata opened by viral movement protein. Also interacts with aphid transmission factor, attaching the virion to aphid stylet when the animal feeds on an virus infected plant. Aphid saliva may later detach the virion, inducing release of infectious particles when the animal feeds on a new plant. The sequence is that of Virion-associated protein from Carnation etched ring virus (CERV).